We begin with the raw amino-acid sequence, 91 residues long: Large ribosomal subunit protein eL43 (91 aa).

Residues 39 to 60 (CPFCGKDAMRRGAVGIWNCSKC) form a C4-type zinc finger.

This sequence belongs to the eukaryotic ribosomal protein eL43 family.

The sequence is that of Large ribosomal subunit protein eL43 (rpl-37a) from Ostertagia ostertagi (Brown stomach worm).